We begin with the raw amino-acid sequence, 204 residues long: Altered inheritance of mitochondria protein 20 (204 aa).

Residues 6–26 form a helical membrane-spanning segment; that stretch reads VAVGTAVGIPIAVGVIIALIF.

Belongs to the SKG1 family.

It localises to the vacuole membrane. Its function is as follows. Involved in cell cycle progression and surviving DNA damage. The protein is Altered inheritance of mitochondria protein 20 (AIM20) of Saccharomyces cerevisiae (strain RM11-1a) (Baker's yeast).